A 309-amino-acid chain; its full sequence is Protein FdhE homolog (309 aa).

It belongs to the FdhE family.

It is found in the cytoplasm. In terms of biological role, necessary for formate dehydrogenase activity. This chain is Protein FdhE homolog, found in Klebsiella pneumoniae (strain 342).